The sequence spans 569 residues: Rab GTPase-binding effector protein 2 (569 aa).

Disordered stretches follow at residues methionine 1–glycine 38, glutamine 181–valine 267, and arginine 388–valine 414. Alanine 2 bears the N-acetylalanine mark. Residues glutamate 29 to glycine 38 show a composition bias toward low complexity. Positions glutamate 34 to proline 184 form a coiled coil. Phosphoserine occurs at positions 189, 193, 200, and 204. Residues serine 245 to serine 257 show a composition bias toward low complexity. A coiled-coil region spans residues tryptophan 292–glutamine 391. A compositionally biased stretch (low complexity) spans proline 393–glutamate 403. A coiled-coil region spans residues arginine 423 to glutamine 523.

Belongs to the rabaptin family. As to quaternary structure, heterodimer with RABGEF1. The dimer binds RAB5A that has been activated by GTP-binding. Interacts with SDCCAG8; this interaction is important for ciliogenesis regulation. Interacts with RAB4; this interaction may mediate VEGFR2 cell surface expression.

It localises to the cytoplasm. Its subcellular location is the early endosome. The protein localises to the cytoskeleton. The protein resides in the microtubule organizing center. It is found in the centrosome. It localises to the cilium basal body. Functionally, plays a role in membrane trafficking and in homotypic early endosome fusion. Participates in arteriogenesis by regulating vascular endothelial growth factor receptor 2/VEGFR2 cell surface expression and endosomal trafficking. By interacting with SDCCAG8, localizes to centrosomes and plays a critical role in ciliogenesis. This Pongo abelii (Sumatran orangutan) protein is Rab GTPase-binding effector protein 2 (RABEP2).